The following is a 443-amino-acid chain: MQNELAQTIPELINWTKEREFSLSLSSDRLAFLLAISIYNNEQTDGELLESDLIDLFRYVSEVFDQSEATLTQRANNAINDLVKQRFLNRFSSEFTEGLAIYRITPLGVGVADYYVRQREFSTLRLSIQLSIVADEIQRASSAAEEGGDERFWRNNVFAPLKYSVAEIFDSIDLSQRMMDENQHQIRERIAELLSQNWHEAILSCEQLLDETSGNLRELQDTLNAAGDKLQAQLLRIQSCLIGRDDLDFVDQLIVNLQNKLDRIISWGQQAIDLWIGYDRHVHKFIRTAIDMDKNRVFGQRLRQSIQDYFKCALVTLYCEAESLLDLRDDETMLNEAEAVGELPSELEYESLSDVQEQIISVMQAHLAPFRAEGKPIDLGAVLREQLALYPQSRHFDVARIIVDQAVKLGMASLDSQAVYPEWQAINDKGAEVQANVIDQYNK.

The tract at residues 209 to 237 (LDETSGNLRELQDTLNAAGDKLQAQLLRI) is leucine-zipper.

This sequence belongs to the MukF family. As to quaternary structure, interacts, and probably forms a ternary complex, with MukE and MukB via its C-terminal region. The complex formation is stimulated by calcium or magnesium. It is required for an interaction between MukE and MukB.

It is found in the cytoplasm. The protein localises to the nucleoid. Involved in chromosome condensation, segregation and cell cycle progression. May participate in facilitating chromosome segregation by condensation DNA from both sides of a centrally located replisome during cell division. Not required for mini-F plasmid partitioning. Probably acts via its interaction with MukB and MukE. Overexpression results in anucleate cells. It has a calcium binding activity. This is Chromosome partition protein MukF from Actinobacillus pleuropneumoniae serotype 5b (strain L20).